We begin with the raw amino-acid sequence, 182 residues long: Large ribosomal subunit protein uL10 (182 aa).

The protein belongs to the universal ribosomal protein uL10 family. As to quaternary structure, part of the ribosomal stalk of the 50S ribosomal subunit. The N-terminus interacts with L11 and the large rRNA to form the base of the stalk. The C-terminus forms an elongated spine to which L12 dimers bind in a sequential fashion forming a multimeric L10(L12)X complex.

Its function is as follows. Forms part of the ribosomal stalk, playing a central role in the interaction of the ribosome with GTP-bound translation factors. This chain is Large ribosomal subunit protein uL10, found in Leptothrix cholodnii (strain ATCC 51168 / LMG 8142 / SP-6) (Leptothrix discophora (strain SP-6)).